The sequence spans 229 residues: Protein fmp52-2, mitochondrial (229 aa).

The transit peptide at 1–45 (MTTAAVFGSTGAVGGQILATLLASDAFSSVKTVSRRLPNAQSPKL) directs the protein to the mitochondrion.

It belongs to the FMP52 family.

The protein localises to the mitochondrion outer membrane. This chain is Protein fmp52-2, mitochondrial (fmp522), found in Aspergillus oryzae (strain ATCC 42149 / RIB 40) (Yellow koji mold).